Here is a 592-residue protein sequence, read N- to C-terminus: Signal peptide peptidase-like 2B (592 aa).

An N-terminal signal peptide occupies residues 1 to 25; sequence MAAAVAAALARLLAAFLLLAAQVAC. Topologically, residues 26–174 are lumenal; it reads EYGMVHVVSQ…APKEPVLDYN (149 aa). The 79-residue stretch at 71-149 folds into the PA domain; that stretch reads TASLLCSAAD…VALLSYKDML (79 aa). Asn97 and Asn129 each carry an N-linked (GlcNAc...) asparagine glycan. The chain crosses the membrane as a helical span at residues 175–195; it reads MVIIFIMAVGTVAIGGYWAGS. The Cytoplasmic portion of the chain corresponds to 196–221; it reads RDVKKRYMKHKRDDGPEKQEDEAVDV. The chain crosses the membrane as a helical span at residues 222–244; sequence TPVMTCVFVVMCCSMLVLLYYFY. Over 245-248 the chain is Lumenal; the sequence is DLLV. The chain crosses the membrane as a helical span at residues 249 to 271; it reads YVVIGIFCLASATGLYSCLAPCV. At 272–293 the chain is on the cytoplasmic side; that stretch reads RRLPFGKCRIPNNSLPYFHKRP. A helical membrane pass occupies residues 294–314; that stretch reads QARMLLLALFCVAVSVVWGVF. Topologically, residues 315 to 319 are lumenal; that stretch reads RNEDQ. The helical transmembrane segment at 320–340 threads the bilayer; that stretch reads WAWVLQDALGIAFCLYMLKTI. The Cytoplasmic segment spans residues 341-348; that stretch reads RLPTFKAC. The helical transmembrane segment at 349-369 threads the bilayer; the sequence is TLLLLVLFLYDIFFVFITPFL. The active site involves Asp359. Over 370-412 the chain is Lumenal; sequence TKSGSSIMVEVATGPSDSATREKLPMVLKVPRLNSSPLALCDR. Residues 413-433 traverse the membrane as a helical segment; that stretch reads PFSLLGFGDILVPGLLVAYCH. Asp421 is a catalytic residue. Over 434–445 the chain is Cytoplasmic; the sequence is RFDIQVQSSRVY. Residues 446–466 form a helical membrane-spanning segment; it reads FVACTIAYGVGLLVTFVALAL. Over 467-470 the chain is Lumenal; sequence MQRG. Residues 471-491 form a helical membrane-spanning segment; that stretch reads QPALLYLVPCTLVTSCAVALW. The PAL signature appears at 472–474; the sequence is PAL. The Cytoplasmic portion of the chain corresponds to 492-592; the sequence is RRELGVFWTG…SPVTQPGASA (101 aa). The segment covering 512 to 524 has biased composition (pro residues); the sequence is PWAPAPADGPQPP. The segment at 512–592 is disordered; that stretch reads PWAPAPADGP…SPVTQPGASA (81 aa). Residues 580 to 592 show a composition bias toward polar residues; sequence AQPSPVTQPGASA.

It belongs to the peptidase A22B family. As to quaternary structure, monomer. Homodimer. Interacts with ITM2B. Interacts with TNF. Interacts with the simian foamy virus envelope glycoprotein gp130 and its processed leader peptide gp18LP; preferentially interacts with the leader peptide gp18LP. Glycosylated. Expressed predominantly in adrenal cortex and mammary gland.

The protein resides in the cell membrane. Its subcellular location is the golgi apparatus membrane. It localises to the lysosome membrane. It is found in the endosome membrane. The protein localises to the membrane. Its function is as follows. Intramembrane-cleaving aspartic protease (I-CLiP) that cleaves type II membrane signal peptides in the hydrophobic plane of the membrane. Functions in ITM2B and TNF processing. Catalyzes the intramembrane cleavage of the anchored fragment of shed TNF-alpha (TNF), which promotes the release of the intracellular domain (ICD) for signaling to the nucleus. May play a role in the regulation of innate and adaptive immunity. Catalyzes the intramembrane cleavage of the simian foamy virus processed leader peptide gp18 of the envelope glycoprotein gp130 dependently of prior ectodomain shedding by furin or furin-like proprotein convertase (PC)-mediated cleavage proteolysis. This chain is Signal peptide peptidase-like 2B, found in Homo sapiens (Human).